A 140-amino-acid polypeptide reads, in one-letter code: 3-hydroxyacyl-[acyl-carrier-protein] dehydratase FabZ (140 aa).

Residue His-47 is part of the active site.

It belongs to the thioester dehydratase family. FabZ subfamily.

Its subcellular location is the cytoplasm. The enzyme catalyses a (3R)-hydroxyacyl-[ACP] = a (2E)-enoyl-[ACP] + H2O. Its function is as follows. Involved in unsaturated fatty acids biosynthesis. Catalyzes the dehydration of short chain beta-hydroxyacyl-ACPs and long chain saturated and unsaturated beta-hydroxyacyl-ACPs. This Streptococcus pneumoniae (strain 70585) protein is 3-hydroxyacyl-[acyl-carrier-protein] dehydratase FabZ.